Here is a 549-residue protein sequence, read N- to C-terminus: Lipase 5 (549 aa).

The N-terminal stretch at 1–15 (MKLALALSLIASVAA) is a signal peptide. The cysteines at positions 75 and 112 are disulfide-linked. The active-site Acyl-ester intermediate is the serine 224. Cysteine 283 and cysteine 292 form a disulfide bridge. N-linked (GlcNAc...) asparagine glycosylation is present at asparagine 329. Glutamate 356 (charge relay system) is an active-site residue. N-linked (GlcNAc...) asparagine glycosylation is present at asparagine 366. Histidine 464 functions as the Charge relay system in the catalytic mechanism.

It belongs to the type-B carboxylesterase/lipase family.

The catalysed reaction is a triacylglycerol + H2O = a diacylglycerol + a fatty acid + H(+). The chain is Lipase 5 (LIP5) from Diutina rugosa (Yeast).